Consider the following 272-residue polypeptide: Hematopoietically-expressed homeobox protein hhex (272 aa).

The homeobox DNA-binding region spans 137–196 (RKGGQVRFSNDQTIELEKKFETQKYLSPPERKRLAKMLQLSERQVKTWFQNRRAKWRRLK). The disordered stretch occupies residues 222–272 (CLSAEQKSRESSLDDPTSSPTSQGNLDSEVSDDSDQEVDIEGDKGYYNCAH). Residues 250–261 (EVSDDSDQEVDI) are compositionally biased toward acidic residues.

First expressed in the dorsal endomesoderm of the gastrula stage embryo. The dorsal endomesoderm contributes to forming the embryonic liver, and expression continues in the liver throughout development. Also expressed in precursors of the developing thyroid gland, and beginning at the tailbud stage, expressed in the ventral region of the head. Also transiently expressed in the endothelial layer of developing vascular tissues of the embryo, beginning at the tailbud stages.

The protein resides in the nucleus. Functionally, recognizes the DNA sequence 5'-ATTAA-3'. Transcriptional repressor. Regulates the differentiation of both endothelial and blood cells. Probably plays a role in the proliferation of vascular endothelial cells during blood vessel development. Establishes anterior identity at two levels; acts early to enhance canonical wnt-signaling by repressing expression of tle4, and acts later to inhibit nodal-signaling by directly targeting nodal/nr1 and nodal2/nr2. May play a role in liver development. Induces heart development. The polypeptide is Hematopoietically-expressed homeobox protein hhex (Xenopus laevis (African clawed frog)).